Consider the following 57-residue polypeptide: Potassium channel toxin alpha-KTx 8.7 (57 aa).

A signal peptide spans 1 to 28; sequence MSRLYAIILIALVFNVIMTIMPDMKVEA. Disulfide bonds link C31-C47, C34-C52, and C38-C54.

In terms of tissue distribution, expressed by the venom gland.

Its subcellular location is the secreted. Inhibits voltage-gated potassium channel rKv1.1/KCNA1 at nanomolar ranges (IC(50)=8.5 nM). This chain is Potassium channel toxin alpha-KTx 8.7, found in Mesobuthus eupeus (Lesser Asian scorpion).